The primary structure comprises 217 residues: Glutathione S-transferase (217 aa).

One can recognise a GST N-terminal domain in the interval 2–82 (TIKVHGNPRS…YLAYTHDHQN (81 aa)). Residues Ser11, 40–41 (HK), 53–54 (QV), and 66–67 (ES) each bind glutathione. The region spanning 91–217 (EKHEMAAQLV…EKTLALQKQA (127 aa)) is the GST C-terminal domain.

The protein belongs to the GST superfamily. Phi family.

The protein localises to the cytoplasm. The catalysed reaction is RX + glutathione = an S-substituted glutathione + a halide anion + H(+). Functionally, conjugation of reduced glutathione to a wide number of exogenous and endogenous hydrophobic electrophiles. This is Glutathione S-transferase (GST) from Silene vulgaris (Bladder campion).